The primary structure comprises 119 residues: MTGAVAPPAVLVAAGGALGAVLRWRVVAATPTTEYPAGTLVVNVVGSFVLAALTFAAADADTMLLFGTGACGAFTTFASFSVDVVALVDADRPVAAAGHALGNLLGAGLAVALAWLLVA.

4 helical membrane passes run 2–22 (TGAV…GAVL), 37–57 (AGTL…TFAA), 62–82 (TMLL…SFSV), and 99–119 (HALG…LLVA). Na(+) is bound by residues glycine 72 and threonine 75.

It belongs to the fluoride channel Fluc/FEX (TC 1.A.43) family.

It is found in the cell membrane. It carries out the reaction fluoride(in) = fluoride(out). Its activity is regulated as follows. Na(+) is not transported, but it plays an essential structural role and its presence is essential for fluoride channel function. In terms of biological role, fluoride-specific ion channel. Important for reducing fluoride concentration in the cell, thus reducing its toxicity. The sequence is that of Fluoride-specific ion channel FluC 1 from Halobacterium salinarum (strain ATCC 700922 / JCM 11081 / NRC-1) (Halobacterium halobium).